We begin with the raw amino-acid sequence, 372 residues long: Tetraacyldisaccharide 4'-kinase (372 aa).

65–72 (TVGGTGKT) is an ATP binding site. Positions 351–372 (QSTATGMADGLDKEHQDGQPAA) are disordered. Over residues 360–372 (GLDKEHQDGQPAA) the composition is skewed to basic and acidic residues.

The protein belongs to the LpxK family.

It carries out the reaction a lipid A disaccharide + ATP = a lipid IVA + ADP + H(+). It participates in glycolipid biosynthesis; lipid IV(A) biosynthesis; lipid IV(A) from (3R)-3-hydroxytetradecanoyl-[acyl-carrier-protein] and UDP-N-acetyl-alpha-D-glucosamine: step 6/6. Transfers the gamma-phosphate of ATP to the 4'-position of a tetraacyldisaccharide 1-phosphate intermediate (termed DS-1-P) to form tetraacyldisaccharide 1,4'-bis-phosphate (lipid IVA). This Cupriavidus metallidurans (strain ATCC 43123 / DSM 2839 / NBRC 102507 / CH34) (Ralstonia metallidurans) protein is Tetraacyldisaccharide 4'-kinase.